A 185-amino-acid chain; its full sequence is Adenine phosphoribosyltransferase (185 aa).

This sequence belongs to the purine/pyrimidine phosphoribosyltransferase family. In terms of assembly, homodimer.

The protein localises to the cytoplasm. The catalysed reaction is AMP + diphosphate = 5-phospho-alpha-D-ribose 1-diphosphate + adenine. It functions in the pathway purine metabolism; AMP biosynthesis via salvage pathway; AMP from adenine: step 1/1. In terms of biological role, catalyzes a salvage reaction resulting in the formation of AMP, that is energically less costly than de novo synthesis. This Corynebacterium glutamicum (strain ATCC 13032 / DSM 20300 / JCM 1318 / BCRC 11384 / CCUG 27702 / LMG 3730 / NBRC 12168 / NCIMB 10025 / NRRL B-2784 / 534) protein is Adenine phosphoribosyltransferase.